The chain runs to 172 residues: Adenine phosphoribosyltransferase (172 aa).

The protein belongs to the purine/pyrimidine phosphoribosyltransferase family. In terms of assembly, homodimer.

The protein resides in the cytoplasm. It carries out the reaction AMP + diphosphate = 5-phospho-alpha-D-ribose 1-diphosphate + adenine. The protein operates within purine metabolism; AMP biosynthesis via salvage pathway; AMP from adenine: step 1/1. Its function is as follows. Catalyzes a salvage reaction resulting in the formation of AMP, that is energically less costly than de novo synthesis. The chain is Adenine phosphoribosyltransferase from Picosynechococcus sp. (strain ATCC 27264 / PCC 7002 / PR-6) (Agmenellum quadruplicatum).